The sequence spans 562 residues: Tissue-type plasminogen activator (562 aa).

An N-terminal signal peptide occupies residues 1–22 (MDAMKRGLCCVLLLCGAVFVSP). Residues 23-32 (SQEIHARFRR) constitute a propeptide that is removed on maturation. The propeptide at 33-35 (GAR) is removed by plasmin. The region spanning 39 to 81 (VICRDEKTQMIYQQHQSWLRPVLRSNRVEYCWCNSGRAQCHSV) is the Fibronectin type-I domain. 17 disulfide bridges follow: Cys41–Cys71, Cys69–Cys78, Cys86–Cys97, Cys91–Cys108, Cys110–Cys119, Cys127–Cys208, Cys148–Cys190, Cys179–Cys203, Cys215–Cys296, Cys236–Cys278, Cys267–Cys291, Cys299–Cys430, Cys342–Cys358, Cys350–Cys419, Cys444–Cys519, Cys476–Cys492, and Cys509–Cys537. The tract at residues 42-52 (RDEKTQMIYQQ) is important for binding to annexin A2. The EGF-like domain maps to 82–120 (PVKSCSEPRCFNGGTCQQALYFSDFVCQCPEGFAGKCCE). Thr96 is a glycosylation site (O-linked (Fuc) threonine). Kringle domains lie at 127-208 (CYED…TPAC) and 215-296 (CYFG…VPSC). N-linked (GlcNAc...) asparagine glycosylation is present at Asn152. The N-linked (GlcNAc...) asparagine; partial glycan is linked to Asn219. Positions 311 to 561 (IKGGLFADIA…YLDWIRDNMR (251 aa)) constitute a Peptidase S1 domain. Residues His357 and Asp406 each act as charge relay system in the active site. Asn483 carries an N-linked (GlcNAc...) asparagine glycan. Ser513 (charge relay system) is an active-site residue.

It belongs to the peptidase S1 family. Heterodimer of chain A and chain B held by a disulfide bond. Forms a heterodimer with SERPINA5. Binds to fibrin with high affinity. This interaction leads to an increase in the catalytic efficiency of the enzyme between 100-fold and 1000-fold, due to an increase in affinity for plasminogen. Similarly, binding to heparin increases the activation of plasminogen. Binds to annexin A2, cytokeratin-8, fibronectin and laminin. Binds to mannose receptor and the low-density lipoprotein receptor-related protein (LRP1); these proteins are involved in TPA clearance. Yet unidentified interactions on endothelial cells and vascular smooth muscle cells (VSMC) lead to a 100-fold stimulation of plasminogen activation. In addition, binding to VSMC reduces TPA inhibition by PAI-1 by 30-fold. Binds LRP1B; binding is followed by internalization and degradation. Interacts with SERPINE1. In complex with SERPINE1, interacts with SORL1. Interacts with apyrase from Anopheles gambiae saliva; the interaction results in PLAT activation probably via an allosteric activation mechanism. In terms of processing, the single chain, almost fully active enzyme, can be further processed into a two-chain fully active form by a cleavage after Arg-310 catalyzed by plasmin, tissue kallikrein or factor Xa. Differential cell-specific N-linked glycosylation gives rise to two glycoforms, type I (glycosylated at Asn-219) and type II (not glycosylated at Asn-219). The single chain type I glycoform is less readily converted into the two-chain form by plasmin, and the two-chain type I glycoform has a lower activity than the two-chain type II glycoform in the presence of fibrin. Post-translationally, N-glycosylation of Asn-152; the bound oligomannosidic glycan is involved in the interaction with the mannose receptor. In terms of processing, characterization of O-linked glycan was studied in Bowes melanoma cell line. As to expression, synthesized in numerous tissues (including tumors) and secreted into most extracellular body fluids, such as plasma, uterine fluid, saliva, gingival crevicular fluid, tears, seminal fluid, and milk.

It is found in the secreted. It localises to the extracellular space. The enzyme catalyses Specific cleavage of Arg-|-Val bond in plasminogen to form plasmin.. With respect to regulation, inhibited by SERPINA5. Inhibited by SERPINE1. Functionally, converts the abundant, but inactive, zymogen plasminogen to plasmin by hydrolyzing a single Arg-Val bond in plasminogen. By controlling plasmin-mediated proteolysis, it plays an important role in tissue remodeling and degradation, in cell migration and many other physiopathological events. During oocyte activation, plays a role in cortical granule reaction in the zona reaction, which contributes to the block to polyspermy. This is Tissue-type plasminogen activator from Homo sapiens (Human).